A 304-amino-acid chain; its full sequence is MHIRILGSAAGGGFPQWNCNCRNCRGVRDGSVAAQPRTQSSIALSDDGERWILCNASPDIRVQIAAFPALQPARRPRDTAIGAIVLLDSQIDHTTGLLSLREGCPHEVWCTQMVHQDLSEGFPLFRMLSHWNGGLRHRPIALDGEPFAIPACPRLRFTAIPLRSSAPPYSPHRGDPHPGDNIGLFVEDLDSAGTLFYAPGLGEVDEALLEWMRRADCLLVDGTLWRDDEMLACEVGDKLGRQMGHLAQSGPGGMLEVLAKVPAARKVLIHINNTNPILDTASAERAELDASGIEVAWDGMHIQL.

This sequence belongs to the PqqB family.

Its pathway is cofactor biosynthesis; pyrroloquinoline quinone biosynthesis. May be involved in the transport of PQQ or its precursor to the periplasm. The sequence is that of Coenzyme PQQ synthesis protein B from Pseudomonas paraeruginosa (strain DSM 24068 / PA7) (Pseudomonas aeruginosa (strain PA7)).